The sequence spans 31 residues: GCLGDKCDYNNGCCSGYVCSRTWKWCVLAGP.

Cystine bridges form between cysteine 2-cysteine 14, cysteine 7-cysteine 19, and cysteine 13-cysteine 26.

In terms of tissue distribution, expressed by the venom gland.

It localises to the secreted. Agglutinates erythrocytes. In Cyriopagopus hainanus (Chinese bird spider), this protein is U2-theraphotoxin-Hhn1a.